We begin with the raw amino-acid sequence, 2034 residues long: Host cell factor 1 (2034 aa).

Ala2 bears the N-acetylalanine mark. Ser6 carries the post-translational modification Phosphoserine. 5 Kelch repeats span residues 44 to 89 (LIVV…GFVC), 93 to 140 (RLLV…RLGH), 148 to 194 (KCYL…ITYG), 217 to 265 (KLVI…TIGN), and 266 to 313 (KMYV…LMDT). Glycyl lysine isopeptide (Lys-Gly) (interchain with G-Cter in ubiquitin) cross-links involve residues Lys105, Lys163, and Lys244. Residue Lys282 forms a Glycyl lysine isopeptide (Lys-Gly) (interchain with G-Cter in SUMO2) linkage. Lys288 bears the N6-acetyllysine mark. A Glycyl lysine isopeptide (Lys-Gly) (interchain with G-Cter in ubiquitin) cross-link involves residue Lys363. In terms of domain architecture, Fibronectin type-III 1 spans 366-469 (PPARVQLVRA…TIQVLPTVPG (104 aa)). A disordered region spans residues 407–434 (ATATSPTPNPVPSVPANPPKSPAPAAAA). Residue Ser411 is modified to Phosphoserine. Over residues 413–428 (TPNPVPSVPANPPKSP) the composition is skewed to pro residues. A required for interaction with OGT region spans residues 500-550 (LVTMRPASQAGKAPVTVTSLPASVRMVVPTQSAQGTVIGSNPQMSGMAALA). Omega-N-methylarginine occurs at positions 504 and 524. Ser598, Ser666, and Ser669 each carry phosphoserine. The tract at residues 610 to 722 (LKTAAAQVGT…KGPLPAGTIL (113 aa)) is interaction with SIN3A. Residues 750–902 (ILGISSVSPS…SLAGAGAHST (153 aa)) are interaction with ZBTB17. Position 813 is an N6-acetyllysine (Lys813). The segment at 813–912 (KIITAVPKIA…SASLATPITT (100 aa)) is interaction with GABP2. HCF repeat repeat units lie at residues 1010–1035 (TLVCSNPPCETHETGTTNTATTTVVA), 1072–1097 (VRVCSNPPCETHETGTTNTATTATSN), and 1101–1126 (QHGCSNPPCETHETGTTSTATTAMSS). The HCF repeat 4; degenerate repeat unit spans residues 1156-1182 (RAQGTVKPPCQTQQTNMTSTTMTVQAT). Phosphoserine occurs at positions 1204 and 1223. 4 disordered regions span residues 1221–1241 (GPSSKDVPTGRQPETYHTYTT), 1302–1374 (PCET…TTST), 1444–1477 (TVTSNMSSNQDPPPAASDQGEVASTQGDSTNITS), and 1491–1525 (RAVTTVTQSTPVPGPSVPPPEELQVSPGPRQQLPP). HCF repeat repeat units lie at residues 1295–1320 (TQVCSNPPCETHETGTTNTATTSNAG) and 1323–1348 (QRVCSNPPCETHETGTTHTATTATSN). The span at 1308–1321 (TGTTNTATTSNAGS) shows a compositional bias: low complexity. An HCF repeat 7; degenerate repeat occupies 1358-1383 (QQPASGHPCETHQTTSTGTTMSVSVG). Residues 1423–1448 (QRVCSNPPCETHETGTTHTATTVTSN) form an HCF repeat 8 repeat. A compositionally biased stretch (low complexity) spans 1491–1501 (RAVTTVTQSTP). Thr1500 carries the phosphothreonine modification. Residues 1502 to 1511 (VPGPSVPPPE) are compositionally biased toward pro residues. 2 positions are modified to phosphoserine: Ser1506 and Ser1516. A coiled-coil region spans residues 1693–1723 (IVLTQQELAALVQQQQQLQEAQAQAQQQHHL). Ser1782 is subject to Phosphoserine. Fibronectin type-III domains follow at residues 1808–1899 (LPPP…TCLP) and 1901–2017 (FPGA…TSKD). Residues Lys1818 and Lys1819 each participate in a glycyl lysine isopeptide (Lys-Gly) (interchain with G-Cter in ubiquitin) cross-link. Position 1849 is a phosphoserine (Ser1849). The segment at 2005–2034 (ATQVRWLQETSKDSSGTKPASKRPMSSPEM) is disordered. Residue Lys2016 is modified to N6-acetyllysine.

In terms of assembly, composed predominantly of six polypeptides ranging from 110 to 150 kDa and a minor 300 kDa polypeptide. The majority of N- and C-terminal cleavage products remain tightly, albeit non-covalently, associated. Interacts with POU2F1, CREB3, ZBTB17, EGR2, E2F4, CREBZF, SP1, GABP2, Sin3 HDAC complex (SIN3A, HDAC1, HDAC2, SUDS3), SAP30, SIN3B and FHL2. Component of a MLL1 complex, composed of at least the core components KMT2A/MLL1, ASH2L, HCFC1, WDR5 and RBBP5, as well as the facultative components BACC1, CHD8, DPY30, E2F6, HCFC2, HSP70, INO80C, KANSL1, LAS1L, MAX, MCRS1, MEN1, MGA, KAT8, PELP1, PHF20, PRP31, RING2, RUVBL1, RUVBL2, SENP3, TAF1, TAF4, TAF6, TAF7, TAF9 and TEX10. Component of a THAP1/THAP3-HCFC1-OGT complex that is required for the regulation of the transcriptional activity of RRM1. Interacts directly with THAP3 (via its HBM). Interacts (via the Kelch-repeat domain) with THAP1 (via the HBM); the interaction recruits HCHC1 to the RRM1. Interacts with THAP7 and THAP11 (via the HMB). Interacts directly with OGT; the interaction, which requires the HCFC1 cleavage site domain, glycosylates and promotes the proteolytic processing of HCFC1, retains OGT in the nucleus and impacts the expression of herpes simplex virus immediate early viral genes. Component of the SET1 complex, at least composed of the catalytic subunit (SETD1A or SETD1B), WDR5, WDR82, RBBP5, ASH2L, CXXC1, HCFC1 and DPY30. Component of the NSL complex at least composed of MOF/KAT8, KANSL1, KANSL2, KANSL3, MCRS1, PHF20, OGT1/OGT, WDR5 and HCFC1. Component of a complex at least composed of ZNF335, HCFC1, CCAR2, EMSY, MKI67, RBBP5, ASH2L and WDR5; the complex is formed as a result of interactions between components of a nuclear receptor-mediated transcription complex and a histone methylation complex. Within the complex interacts with ZNF335. Interacts with TET2 and TET3. Interacts with HCFC1R1. Interacts with THAP11. Interacts (via Kelch domain) with KMT2E/MLL5 isoform 3 (via HBM motif). Interacts with E2F1. Accessory scaffold component of the polycomb repressive deubiquitinase (PR-DUB) complex, at least composed of BAP1, one of ASXL1, ASXL2 or (probably) ASXL3 and one of MBD5 or MBD6; the PR-DUB core associates with a number of accessory proteins, including FOXK1, FOXK2, KDM1B, HCFC1, YY1 and OGT. Interacts with YY1 (via Gly-rich region); the interaction is direct. Interacts with BAP1 (via HBM-like motif). Post-translationally, proteolytically cleaved at one or several PPCE--THET sites within the HCF repeats. Further cleavage of the primary N- and C-terminal chains results in a 'trimming' and accumulation of the smaller chains. Cleavage is promoted by O-glycosylation. O-glycosylated. GlcNAcylation by OGT promotes proteolytic processing. In terms of processing, ubiquitinated. Lys-1818 and Lys-1819 are ubiquitinated both via 'Lys-48'- and 'Lys-63'-linked polyubiquitin chains. BAP1 mediated deubiquitination of 'Lys-48'-linked polyubiquitin chains; deubiquitination by BAP1 does not seem to stabilize the protein.

It is found in the cytoplasm. The protein localises to the nucleus. In terms of biological role, transcriptional coregulator. Serves as a scaffold protein, bridging interactions between transcription factors, including THAP11 and ZNF143, and transcriptional coregulators. Involved in control of the cell cycle. Also antagonizes transactivation by ZBTB17 and GABP2; represses ZBTB17 activation of the p15(INK4b) promoter and inhibits its ability to recruit p300. Coactivator for EGR2 and GABP2. Tethers the chromatin modifying Set1/Ash2 histone H3 'Lys-4' methyltransferase (H3K4me) and Sin3 histone deacetylase (HDAC) complexes (involved in the activation and repression of transcription, respectively) together. Component of a THAP1/THAP3-HCFC1-OGT complex that is required for the regulation of the transcriptional activity of RRM1. As part of the NSL complex it may be involved in acetylation of nucleosomal histone H4 on several lysine residues. Recruits KMT2E/MLL5 to E2F1 responsive promoters promoting transcriptional activation and thereby facilitates G1 to S phase transition. Modulates expression of homeobox protein PDX1, perhaps acting in concert with transcription factor E2F1, thereby regulating pancreatic beta-cell growth and glucose-stimulated insulin secretion. May negatively modulate transcriptional activity of FOXO3. The sequence is that of Host cell factor 1 from Rattus norvegicus (Rat).